The following is a 1322-amino-acid chain: Protein fantom (1322 aa).

The signal sequence occupies residues 1-22 (MVSARYPIEKWSRPQLEDHFHN). A coiled-coil region spans residues 15–89 (QLEDHFHNVV…MKLKAAKQQL (75 aa)). Polar residues predominate over residues 108–119 (RSTFRQPPSTFR). Disordered regions lie at residues 108-151 (RSTF…GEKL), 189-275 (KSSV…PDQT), and 392-418 (RIEE…SQSE). Low complexity predominate over residues 195–217 (SSPPTRLSTSSSSKSSSSNNNND). Acidic residues predominate over residues 224 to 234 (ELEEMSEMSDD). The stretch at 274–362 (QTEKVLLDKL…EDQKKFEAMR (89 aa)) forms a coiled coil. The stretch at 456–538 (ASENSLARWQ…FMLEEQIRTI (83 aa)) forms a coiled coil. Disordered stretches follow at residues 891–1094 (AELH…KPRN) and 1121–1149 (TDPL…PVPL). A compositionally biased stretch (low complexity) spans 918 to 927 (TDSSDTSFSH). Residues 956 to 975 (SDGEEEADRIVFDDDDDEIE) show a composition bias toward acidic residues. Basic and acidic residues predominate over residues 984–996 (RDPEPLEVPERQV). Polar residues predominate over residues 1015–1029 (NGTNESKESTPVTQR). A compositionally biased stretch (acidic residues) spans 1042–1067 (PELEPESGPEPEPVVESEPNEVAETE). The span at 1068–1080 (EDRKRELKTEELK) shows a compositional bias: basic and acidic residues. Low complexity predominate over residues 1127–1139 (SVPPSESSSTSSP).

It belongs to the RPGRIP1 family. Expressed at the transition zone at the base of cilia. Expressed in ciliated sensory neurons, including the amphid neurons in the head.

It localises to the cell projection. The protein resides in the cilium. In terms of biological role, thought to have an important role in cilia formation and cilia-mediated chemosensation. Involved in the docking of other MKS/MKSR proteins localized to the transition zone of the cilia. The chain is Protein fantom (mks-5) from Caenorhabditis elegans.